The primary structure comprises 464 residues: NADH dehydrogenase [ubiquinone] flavoprotein 1, mitochondrial (464 aa).

The transit peptide at 1–20 directs the protein to the mitochondrion; it reads MLATRRLLGWSLPARVSVRF. At K81 the chain carries N6-acetyllysine; alternate. K81 carries the post-translational modification N6-succinyllysine; alternate. 87–96 serves as a coordination point for NADH; that stretch reads GRGGAGFPTG. K104 bears the N6-acetyllysine mark. 199–247 is an FMN binding site; sequence RGAGAYICGEETALIESIEGKQGKPRLKPPFPADVGVFGCPTTVANVET. An Omega-N-methylarginine modification is found at R257. The residue at position 375 (K375) is an N6-acetyllysine. Residues C379, C382, C385, and C425 each contribute to the [4Fe-4S] cluster site.

Belongs to the complex I 51 kDa subunit family. In terms of assembly, core subunit of respiratory chain NADH dehydrogenase (Complex I) which is composed of 45 different subunits. This is a component of the flavoprotein-sulfur (FP) fragment of the enzyme. Interacts with RAB5IF. FMN is required as a cofactor. Requires [4Fe-4S] cluster as cofactor.

It localises to the mitochondrion inner membrane. The enzyme catalyses a ubiquinone + NADH + 5 H(+)(in) = a ubiquinol + NAD(+) + 4 H(+)(out). In terms of biological role, core subunit of the mitochondrial membrane respiratory chain NADH dehydrogenase (Complex I) which catalyzes electron transfer from NADH through the respiratory chain, using ubiquinone as an electron acceptor. Part of the peripheral arm of the enzyme, where the electrons from NADH are accepted by flavin mononucleotide (FMN) and then passed along a chain of iron-sulfur clusters by electron tunnelling to the final acceptor ubiquinone. Contains FMN, which is the initial electron acceptor as well as one iron-sulfur cluster. The chain is NADH dehydrogenase [ubiquinone] flavoprotein 1, mitochondrial from Homo sapiens (Human).